Here is a 320-residue protein sequence, read N- to C-terminus: N-acetylneuraminate lyase (320 aa).

Aceneuramate is bound by residues Thr51 and Thr52. Catalysis depends on Tyr143, which acts as the Proton donor. Catalysis depends on Lys173, which acts as the Schiff-base intermediate with substrate. Aceneuramate is bound by residues Ser175, Gly199, Asp201, Glu202, and Ser218.

Belongs to the DapA family. NanA subfamily. In terms of assembly, homotetramer.

The protein localises to the cytoplasm. It catalyses the reaction aceneuramate = aldehydo-N-acetyl-D-mannosamine + pyruvate. It participates in amino-sugar metabolism; N-acetylneuraminate degradation. Functionally, catalyzes the cleavage of N-acetylneuraminic acid (sialic acid) to form pyruvate and N-acetylmannosamine via a Schiff base intermediate. It prevents sialic acids from being recycled and returning to the cell surface. Involved in the N-glycolylneuraminic acid (Neu5Gc) degradation pathway. The polypeptide is N-acetylneuraminate lyase (Rattus norvegicus (Rat)).